Reading from the N-terminus, the 196-residue chain is Holliday junction branch migration complex subunit RuvA (196 aa).

Residues Met-1–His-63 are domain I. A domain II region spans residues Thr-64–Arg-142. The flexible linker stretch occupies residues Lys-143–Gln-148. A domain III region spans residues Gln-148–Lys-196.

This sequence belongs to the RuvA family. In terms of assembly, homotetramer. Forms an RuvA(8)-RuvB(12)-Holliday junction (HJ) complex. HJ DNA is sandwiched between 2 RuvA tetramers; dsDNA enters through RuvA and exits via RuvB. An RuvB hexamer assembles on each DNA strand where it exits the tetramer. Each RuvB hexamer is contacted by two RuvA subunits (via domain III) on 2 adjacent RuvB subunits; this complex drives branch migration. In the full resolvosome a probable DNA-RuvA(4)-RuvB(12)-RuvC(2) complex forms which resolves the HJ.

It is found in the cytoplasm. Its function is as follows. The RuvA-RuvB-RuvC complex processes Holliday junction (HJ) DNA during genetic recombination and DNA repair, while the RuvA-RuvB complex plays an important role in the rescue of blocked DNA replication forks via replication fork reversal (RFR). RuvA specifically binds to HJ cruciform DNA, conferring on it an open structure. The RuvB hexamer acts as an ATP-dependent pump, pulling dsDNA into and through the RuvAB complex. HJ branch migration allows RuvC to scan DNA until it finds its consensus sequence, where it cleaves and resolves the cruciform DNA. In Streptococcus agalactiae serotype III (strain NEM316), this protein is Holliday junction branch migration complex subunit RuvA.